The primary structure comprises 2324 residues: Acetyl-CoA carboxylase (2324 aa).

M1 is subject to N-acetylmethionine. The disordered stretch occupies residues 1–34 (MEESSQPAKPLEMNPHSRFIIGSVSEDNSEDETS). Phosphoserine occurs at positions 78 and 80. Positions 117–618 (VIEKVLIANN…DTGWLDRLIA (502 aa)) constitute a Biotin carboxylation domain. In terms of domain architecture, ATP-grasp spans 275–466 (QKRILNVPQE…LPAAQLQIAM (192 aa)). 315–320 (GGGGKG) provides a ligand contact to ATP. Mn(2+) contacts are provided by E424, E437, and N439. The active site involves R441. The Biotinyl-binding domain maps to 745-819 (FEKENDPSIL…DPGCVIAKLQ (75 aa)). K786 is modified (N6-biotinyllysine). The residue at position 1193 (S1193) is a Phosphoserine. A CoA carboxyltransferase N-terminal domain is found at 1553–1891 (PYVTKDLLQS…SVYSPVPILK (339 aa)). The tract at residues 1553–2211 (PYVTKDLLQS…EDVVKKKIHD (659 aa)) is carboxyltransferase. Residues R1800, K2104, and R2106 each contribute to the CoA site. The CoA carboxyltransferase C-terminal domain occupies 1895–2211 (PIDRTIDFVP…EDVVKKKIHD (317 aa)).

Requires biotin as cofactor. It depends on Mn(2+) as a cofactor.

Its subcellular location is the cytoplasm. It carries out the reaction hydrogencarbonate + acetyl-CoA + ATP = malonyl-CoA + ADP + phosphate + H(+). The catalysed reaction is N(6)-biotinyl-L-lysyl-[protein] + hydrogencarbonate + ATP = N(6)-carboxybiotinyl-L-lysyl-[protein] + ADP + phosphate + H(+). It functions in the pathway lipid metabolism; malonyl-CoA biosynthesis; malonyl-CoA from acetyl-CoA: step 1/1. By phosphorylation. In terms of biological role, catalyzes the rate-limiting reaction in the biogenesis of long-chain fatty acids. Carries out three functions: biotin carboxyl carrier protein, biotin carboxylase and carboxyltransferase. In Gallus gallus (Chicken), this protein is Acetyl-CoA carboxylase (ACAC).